We begin with the raw amino-acid sequence, 319 residues long: tRNA uridine(34) hydroxylase (319 aa).

Positions 123 to 221 constitute a Rhodanese domain; it reads GDPDVVVIDT…YLETIPPEQS (99 aa). Cys181 serves as the catalytic Cysteine persulfide intermediate. Residues 298-319 are disordered; sequence ARQQVHIGASPEPKAMPATAGR.

This sequence belongs to the TrhO family.

The catalysed reaction is uridine(34) in tRNA + AH2 + O2 = 5-hydroxyuridine(34) in tRNA + A + H2O. Its function is as follows. Catalyzes oxygen-dependent 5-hydroxyuridine (ho5U) modification at position 34 in tRNAs. This Albidiferax ferrireducens (strain ATCC BAA-621 / DSM 15236 / T118) (Rhodoferax ferrireducens) protein is tRNA uridine(34) hydroxylase.